Here is a 354-residue protein sequence, read N- to C-terminus: Peptide chain release factor 1 (354 aa).

N5-methylglutamine is present on Gln-231.

The protein belongs to the prokaryotic/mitochondrial release factor family. Post-translationally, methylated by PrmC. Methylation increases the termination efficiency of RF1.

Its subcellular location is the cytoplasm. In terms of biological role, peptide chain release factor 1 directs the termination of translation in response to the peptide chain termination codons UAG and UAA. In Acholeplasma laidlawii (strain PG-8A), this protein is Peptide chain release factor 1.